The following is a 368-amino-acid chain: Phosphate acyltransferase (368 aa).

The disordered stretch occupies residues 334 to 368 (EGSLEQAARDASGAGHASPIAGQPAEPYAAQSSKA).

This sequence belongs to the PlsX family. Homodimer. Probably interacts with PlsY.

It is found in the cytoplasm. It catalyses the reaction a fatty acyl-[ACP] + phosphate = an acyl phosphate + holo-[ACP]. It participates in lipid metabolism; phospholipid metabolism. Functionally, catalyzes the reversible formation of acyl-phosphate (acyl-PO(4)) from acyl-[acyl-carrier-protein] (acyl-ACP). This enzyme utilizes acyl-ACP as fatty acyl donor, but not acyl-CoA. The protein is Phosphate acyltransferase of Paraburkholderia xenovorans (strain LB400).